Reading from the N-terminus, the 1058-residue chain is Carbamoyl phosphate synthase large chain (1058 aa).

The interval 1 to 401 (MPKRTDIQKI…SLLKACRSLE (401 aa)) is carboxyphosphate synthetic domain. ATP contacts are provided by Arg-129, Arg-169, Gly-175, Gly-176, Arg-208, Ile-210, Glu-215, Gly-241, Ile-242, His-243, Gln-284, and Glu-298. One can recognise an ATP-grasp 1 domain in the interval 133 to 327 (KQLMEELEQP…IAKLAAKIAV (195 aa)). Mg(2+)-binding residues include Gln-284, Glu-298, and Asn-300. Gln-284, Glu-298, and Asn-300 together coordinate Mn(2+). Residues 402-546 (IGVHHNEIPE…YSTYGWENES (145 aa)) form an oligomerization domain region. The segment at 547–929 (IRSDKESVLV…ALYKAFEASY (383 aa)) is carbamoyl phosphate synthetic domain. The ATP-grasp 2 domain maps to 671–861 (EQALKELDIP…MAQVATKLIL (191 aa)). ATP is bound by residues Arg-707, Ser-746, Ile-748, Glu-752, Gly-777, Val-778, His-779, Ser-780, Gln-820, and Glu-832. The Mg(2+) site is built by Gln-820, Glu-832, and Asn-834. Mn(2+) contacts are provided by Gln-820, Glu-832, and Asn-834. Residues 930 to 1058 (LHLPTFGNVV…ESRSFVTEAI (129 aa)) form the MGS-like domain. The tract at residues 930-1058 (LHLPTFGNVV…ESRSFVTEAI (129 aa)) is allosteric domain.

It belongs to the CarB family. In terms of assembly, composed of two chains; the small (or glutamine) chain promotes the hydrolysis of glutamine to ammonia, which is used by the large (or ammonia) chain to synthesize carbamoyl phosphate. Tetramer of heterodimers (alpha,beta)4. Mg(2+) serves as cofactor. Mn(2+) is required as a cofactor.

The catalysed reaction is hydrogencarbonate + L-glutamine + 2 ATP + H2O = carbamoyl phosphate + L-glutamate + 2 ADP + phosphate + 2 H(+). The enzyme catalyses hydrogencarbonate + NH4(+) + 2 ATP = carbamoyl phosphate + 2 ADP + phosphate + 2 H(+). It functions in the pathway amino-acid biosynthesis; L-arginine biosynthesis; carbamoyl phosphate from bicarbonate: step 1/1. The protein operates within pyrimidine metabolism; UMP biosynthesis via de novo pathway; (S)-dihydroorotate from bicarbonate: step 1/3. Functionally, large subunit of the glutamine-dependent carbamoyl phosphate synthetase (CPSase). CPSase catalyzes the formation of carbamoyl phosphate from the ammonia moiety of glutamine, carbonate, and phosphate donated by ATP, constituting the first step of 2 biosynthetic pathways, one leading to arginine and/or urea and the other to pyrimidine nucleotides. The large subunit (synthetase) binds the substrates ammonia (free or transferred from glutamine from the small subunit), hydrogencarbonate and ATP and carries out an ATP-coupled ligase reaction, activating hydrogencarbonate by forming carboxy phosphate which reacts with ammonia to form carbamoyl phosphate. This chain is Carbamoyl phosphate synthase large chain, found in Streptococcus pneumoniae (strain ATCC BAA-255 / R6).